Reading from the N-terminus, the 334-residue chain is Formamidase (334 aa).

The CN hydrolase domain maps to 14-260; that stretch reads FLVAAIQFPV…WEIVTGEIYP (247 aa). The active-site Proton acceptor is the Glu60. Lys133 (proton donor) is an active-site residue. Residue Cys166 is the Nucleophile of the active site.

The protein belongs to the carbon-nitrogen hydrolase superfamily. Aliphatic amidase family. In terms of assembly, homotetramer.

It catalyses the reaction formamide + H2O = formate + NH4(+). Inhibited by iodoacetate. Appears to be regulated by the fur protein, but this effect is not mediated at the transcriptional level. Its function is as follows. Is an aliphatic amidase with a restricted substrate specificity, as it only hydrolyzes formamide. Probably involved in the nitrogen metabolism of H.pylori. The protein is Formamidase (amiF) of Helicobacter pylori (strain ATCC 700392 / 26695) (Campylobacter pylori).